A 52-amino-acid polypeptide reads, in one-letter code: Insulin (52 aa).

3 disulfides stabilise this stretch: Cys7–Cys38, Cys19–Cys51, and Cys37–Cys42.

It belongs to the insulin family. In terms of assembly, heterodimer of a B chain and an A chain linked by two disulfide bonds.

Its subcellular location is the secreted. Functionally, insulin decreases blood glucose concentration. It increases cell permeability to monosaccharides, amino acids and fatty acids. It accelerates glycolysis, the pentose phosphate cycle, and glycogen synthesis in liver. In Acipenser gueldenstaedtii (Russian sturgeon), this protein is Insulin (ins).